The primary structure comprises 72 residues: Translation initiation factor IF-1 (72 aa).

One can recognise an S1-like domain in the interval 1 to 72 (MIKEDNIEMH…SKGRIIFRSR (72 aa)).

Belongs to the IF-1 family. Component of the 30S ribosomal translation pre-initiation complex which assembles on the 30S ribosome in the order IF-2 and IF-3, IF-1 and N-formylmethionyl-tRNA(fMet); mRNA recruitment can occur at any time during PIC assembly.

Its subcellular location is the cytoplasm. Functionally, one of the essential components for the initiation of protein synthesis. Stabilizes the binding of IF-2 and IF-3 on the 30S subunit to which N-formylmethionyl-tRNA(fMet) subsequently binds. Helps modulate mRNA selection, yielding the 30S pre-initiation complex (PIC). Upon addition of the 50S ribosomal subunit IF-1, IF-2 and IF-3 are released leaving the mature 70S translation initiation complex. The protein is Translation initiation factor IF-1 of Blochmanniella floridana.